A 535-amino-acid polypeptide reads, in one-letter code: Keratin, type II cytoskeletal 79 (535 aa).

Composition is skewed to polar residues over residues methionine 1–threonine 12 and glutamine 28–valine 38. Positions methionine 1 to serine 53 are disordered. The head stretch occupies residues methionine 1–glutamate 141. The segment covering glycine 43–serine 53 has biased composition (gly residues). The coil 1A stretch occupies residues glutamate 142–leucine 177. Residues glutamate 142–methionine 457 enclose the IF rod domain. A linker 1 region spans residues glutamine 178–phenylalanine 198. The segment at isoleucine 199–valine 290 is coil 1B. Residues glutamine 291–isoleucine 314 are linker 12. Residues isoleucine 315–glutamate 453 form a coil 2 region. Residues glutamate 454–tyrosine 535 form a tail region.

This sequence belongs to the intermediate filament family. In terms of assembly, heterotetramer of two type I and two type II keratins.

This Bos taurus (Bovine) protein is Keratin, type II cytoskeletal 79 (KRT79).